Here is a 244-residue protein sequence, read N- to C-terminus: tRNA (guanine-N(7)-)-methyltransferase (244 aa).

S-adenosyl-L-methionine-binding residues include E74, E99, D126, and D149. The active site involves D149. Residues K153, D185, and 222 to 225 (TKFE) contribute to the substrate site.

The protein belongs to the class I-like SAM-binding methyltransferase superfamily. TrmB family.

It catalyses the reaction guanosine(46) in tRNA + S-adenosyl-L-methionine = N(7)-methylguanosine(46) in tRNA + S-adenosyl-L-homocysteine. The protein operates within tRNA modification; N(7)-methylguanine-tRNA biosynthesis. Its function is as follows. Catalyzes the formation of N(7)-methylguanine at position 46 (m7G46) in tRNA. In Colwellia psychrerythraea (strain 34H / ATCC BAA-681) (Vibrio psychroerythus), this protein is tRNA (guanine-N(7)-)-methyltransferase.